The primary structure comprises 84 residues: MSSGNISNLPARRPFMRRRKVCPFSGENAPAIDFKDPKLLLRYMSERGKIVPSRITAVSAKKQRELARAIKRARQLALLPYVVD.

It belongs to the bacterial ribosomal protein bS18 family. In terms of assembly, part of the 30S ribosomal subunit. Forms a tight heterodimer with protein bS6.

In terms of biological role, binds as a heterodimer with protein bS6 to the central domain of the 16S rRNA, where it helps stabilize the platform of the 30S subunit. The protein is Small ribosomal subunit protein bS18 of Maricaulis maris (strain MCS10) (Caulobacter maris).